The primary structure comprises 2313 residues: Cell surface glycoprotein 1 (2313 aa).

The N-terminal stretch at 1-28 (MKRKNKVLSILLTLLLIISTTSVNMSFA) is a signal peptide. 2 Cohesin domains span residues 34-197 (IEMV…VVEA) and 205-367 (VALE…EIVV). The span at 369-378 (GEEPGEEPTE) shows a compositional bias: acidic residues. Residues 369-400 (GEEPGEEPTEEPVPTETSVDPTPTVTEEPVPS) form a disordered region. The span at 380-400 (PVPTETSVDPTPTVTEEPVPS) shows a compositional bias: low complexity. One can recognise a Cohesin 3 domain in the interval 407–569 (VIMELDKTKV…SVVQPGEIVV (163 aa)). The span at 571–580 (GEEPGEEPTE) shows a compositional bias: acidic residues. Residues 571–602 (GEEPGEEPTEEPVPTETSVDPTPTVTEEPVPS) form a disordered region. The segment covering 582 to 602 (PVPTETSVDPTPTVTEEPVPS) has biased composition (low complexity). One can recognise a Cohesin 4 domain in the interval 609–771 (VIMELDKTKV…SVVQPGEIVA (163 aa)). The span at 772–782 (EGEEPGEEPTE) shows a compositional bias: acidic residues. The disordered stretch occupies residues 772–805 (EGEEPGEEPTEEPVPTETSADPTPTVTEEPVPSE). Residues 784–803 (PVPTETSADPTPTVTEEPVP) show a composition bias toward low complexity. Residues 811-973 (VIMELDKTKV…SVVQPGEIVA (163 aa)) enclose the Cohesin 5 domain. Positions 974-984 (EGEEPGEEPTE) are enriched in acidic residues. A disordered region spans residues 974 to 1007 (EGEEPGEEPTEEPVPTETPVDPTPTVTEEPVPSE). Positions 986 to 1007 (PVPTETPVDPTPTVTEEPVPSE) are enriched in low complexity. Residues 1013–1175 (VIMELDKTKV…SVVQPGEIVA (163 aa)) form the Cohesin 6 domain. Disordered stretches follow at residues 1177-1203 (GEEP…EPVP) and 1374-2111 (ASDE…PDGS). The segment covering 1184–1203 (PVPTETPVDPTPTVTEEPVP) has biased composition (low complexity). Positions 1211–1375 (VIMELDKTKV…IQPAPIKAAS (165 aa)) constitute a Cohesin 7 domain. Residues 1376–1390 (DEPIPTDTPSDEPTP) show a composition bias toward low complexity. Residues 1383-2025 (TPSDEPTPSD…SDEPTPSETP (643 aa)) form an approximate tandem repeats of T-P-S-D-E-P region. Positions 1391–1411 (SDEPTPSDEPTPSDEPTPSDE) are enriched in pro residues. A compositionally biased stretch (low complexity) spans 1423–1433 (PTDTPSDEPTP). Residues 1434–1454 (SDEPTPSDEPTPSDEPTPSDE) are compositionally biased toward pro residues. Residues 1466 to 1476 (PTDTPSDEPTP) are compositionally biased toward low complexity. Residues 1477–1497 (SDEPTPSDEPTPSDEPTPSDE) are compositionally biased toward pro residues. Low complexity predominate over residues 1509 to 1519 (PTDTPSDEPTP). Residues 1520–1540 (SDEPTPSDEPTPSDEPTPSDE) are compositionally biased toward pro residues. Low complexity predominate over residues 1552 to 1562 (PTDTPSDEPTP). Pro residues predominate over residues 1563–1595 (SDEPTPSDEPTPSDEPTPSDEPTPSDEPTPSDE). The segment covering 1607–1617 (PTDTPSDEPTP) has biased composition (low complexity). Residues 1618-1650 (SDEPTPSDEPTPSDEPTPSDEPTPSDEPTPSDE) show a composition bias toward pro residues. A compositionally biased stretch (low complexity) spans 1662-1672 (PTDTPSDEPTP). The span at 1673 to 1693 (SDEPTPSDEPTPSDEPTPSDE) shows a compositional bias: pro residues. The segment covering 1705–1715 (PTDTPSDEPTP) has biased composition (low complexity). Over residues 1716 to 1736 (SDEPTPSDEPTPSDEPTPSDE) the composition is skewed to pro residues. Positions 1748–1758 (PTDTPSDEPTP) are enriched in low complexity. The span at 1759–1779 (SDEPTPSDEPTPSDEPTPSDE) shows a compositional bias: pro residues. The segment covering 1791–1801 (PTDTPSDEPTP) has biased composition (low complexity). Positions 1802-1822 (SDEPTPSDEPTPSDEPTPSDE) are enriched in pro residues. A compositionally biased stretch (low complexity) spans 1834-1844 (PTDTPSDEPTP). Over residues 1845–1865 (SDEPTPSDEPTPSDEPTPSDE) the composition is skewed to pro residues. Residues 1877 to 1887 (PTDTPSDEPTP) show a composition bias toward low complexity. The segment covering 1888 to 1908 (SDEPTPSDEPTPSDEPTPSDE) has biased composition (pro residues). Residues 1920–1930 (PTDTPSDEPTP) show a composition bias toward low complexity. A compositionally biased stretch (pro residues) spans 1931 to 1963 (SDEPTPSDEPTPSDEPTPSDEPTPSDEPTPSDE). Residues 1975–1985 (PTDTPSDEPTP) are compositionally biased toward low complexity. Pro residues-rich tracts occupy residues 1986 to 2018 (SDEP…PSDE) and 2027 to 2039 (EPTP…PTPS). Gly residues predominate over residues 2045-2062 (GSGGSGGSGGGGGGGGGT). SLH domains are found at residues 2067 to 2140 (PTPT…YGAQ), 2141 to 2204 (SASP…EIMS), and 2211 to 2274 (ISNP…GAPK). Residues 2073 to 2082 (SKPTSTPAPT) show a composition bias toward low complexity.

In terms of assembly, assembled into mono-layered crystalline arrays.

It is found in the secreted. Its subcellular location is the cell wall. The protein resides in the S-layer. In Acetivibrio thermocellus (strain ATCC 27405 / DSM 1237 / JCM 9322 / NBRC 103400 / NCIMB 10682 / NRRL B-4536 / VPI 7372) (Clostridium thermocellum), this protein is Cell surface glycoprotein 1 (olpB).